Consider the following 130-residue polypeptide: MTLLDPLANALSHITNSERVGKREVYIKPASKLIGEVLRVMQKYGYIGEFEFIDDGRAGVYRVQLLGKINKAGAIKPRFPVKARDYERWEKRFLPAFEFGILIVSTSQGVMSHKEAREKGIGGRLIAYVY.

It belongs to the universal ribosomal protein uS8 family. Part of the 30S ribosomal subunit.

Its function is as follows. One of the primary rRNA binding proteins, it binds directly to 16S rRNA central domain where it helps coordinate assembly of the platform of the 30S subunit. This chain is Small ribosomal subunit protein uS8, found in Pyrococcus abyssi (strain GE5 / Orsay).